Consider the following 294-residue polypeptide: Cyclin-dependent kinase A-1 (294 aa).

In terms of domain architecture, Protein kinase spans 4-287 (YEKVEKIGEG…ARAALEHEYF (284 aa)). ATP contacts are provided by residues 10-18 (IGEGTYGVV) and lysine 33. At tyrosine 15 the chain carries Phosphotyrosine. Aspartate 127 functions as the Proton acceptor in the catalytic mechanism. A Phosphothreonine modification is found at threonine 161.

Belongs to the protein kinase superfamily. CMGC Ser/Thr protein kinase family. CDC2/CDKX subfamily. Interacts with CDT1A, CYCA2-3, CYCD2-1, CYCD3-1, CYCD4-1, CYCD4-2, CYCH1-1, CYCU1-1, CYCU2-1, CYCU2-2, CYCU3-1, CYCU4-1, CYCU4-2, CYCU4-3, CKS1, KRP2/ICK2, KRP3/ICK6, KRP4/ICK7, KRP6/ICK4, KRP7/ICK5, and C-terminal domain of KRP1/ICK1. Interacts with WEE1 and TIF4A-1/EIF4A-1. Interacts with PAS2; when phosphorylated at Tyr-15. Interacts with SMR3, SMR4, SMR5, SMR6, SMR8 and At4g14310. Binds to CYCD3-2. Component of a DREAM-like complex which modulates a variety of developmentally regulated genes and of the mitotic genes in proliferating and differentiated cells. Interacts with MYB3R3 at later and with MYB3R4 at earlier stages of leaf development. May interact with SPCH. Phosphorylated at Tyr-15 by WEE1. Phosphorylation at Thr-161 is important for the kinase activity and substrate binding. Binding to the anti-phosphatase PAS2 prevents dephosphorylation. As to expression, expressed in roots, stems, flowers and siliques.

It localises to the cytoplasm. Its subcellular location is the nucleus. The catalysed reaction is L-seryl-[protein] + ATP = O-phospho-L-seryl-[protein] + ADP + H(+). The enzyme catalyses L-threonyl-[protein] + ATP = O-phospho-L-threonyl-[protein] + ADP + H(+). It catalyses the reaction [DNA-directed RNA polymerase] + ATP = phospho-[DNA-directed RNA polymerase] + ADP + H(+). With respect to regulation, CDK kinase activated by CDKF-1. CDK kinase activity inhibited by KRP1/ICK1, KRP2/ICK2, KRP3/ICK6, KRP4/ICK7, KRP5/ICK3, KRP6/ICK4 and KRP7/ICK5. Down-regulated by phosphorylation by WEE1. Its function is as follows. Involved in the control of the cell cycle. Essential for both G1/S and G2/M (mitosis) phase transitions. Functions in cell morphogenesis as well as cell proliferation. Required for cell division (entry into mitosis) of the generative cell in male gametogenesis. Required to trigger guard mother cells (GMC) symmetric divisions at the late stage of stomatal development, probably via the regulation of G1 to S transition in the cell cycle. Required for the function of SPCH in entering the stomatal lineage. Promotes divisions in the guard cells (GCs) after the guard mother cells (GMC) symmetric division when in the presence of CYCD3-2 via the phosphorylation of SPCH. This chain is Cyclin-dependent kinase A-1, found in Arabidopsis thaliana (Mouse-ear cress).